The chain runs to 251 residues: Small ribosomal subunit protein uS3 (251 aa).

Residues 39 to 109 (IRNYVQARLK…EVKIDVIEVI (71 aa)) form the KH type-2 domain. The span at 222–239 (LKKIKDRRGEQRSRGRDS) shows a compositional bias: basic and acidic residues. Residues 222–251 (LKKIKDRRGEQRSRGRDSRNRRRRKPRQTT) form a disordered region. The segment covering 240 to 251 (RNRRRRKPRQTT) has biased composition (basic residues).

It belongs to the universal ribosomal protein uS3 family. In terms of assembly, part of the 30S ribosomal subunit. Forms a tight complex with proteins S10 and S14.

Binds the lower part of the 30S subunit head. Binds mRNA in the 70S ribosome, positioning it for translation. The chain is Small ribosomal subunit protein uS3 from Prosthecochloris aestuarii (strain DSM 271 / SK 413).